We begin with the raw amino-acid sequence, 451 residues long: Chromosomal replication initiator protein DnaA (451 aa).

A domain I, interacts with DnaA modulators region spans residues 1–71 (MSEQEIWKKV…QTIMKDVIGY (71 aa)). The interval 71 to 112 (YEVEPKFFTAEQLAELDETSRKSNTPSEPQRQIIEYGHEGTD) is domain II. A domain III, AAA+ region region spans residues 113–329 (QFNTHNTFDT…GALTRLLAYS (217 aa)). ATP is bound by residues Gly157, Gly159, Lys160, and Thr161. Positions 330 to 451 (KLQGRPITTE…EDLEKEIRNQ (122 aa)) are domain IV, binds dsDNA.

The protein belongs to the DnaA family. In terms of assembly, oligomerizes as a right-handed, spiral filament on DNA at oriC.

It is found in the cytoplasm. Its function is as follows. Plays an essential role in the initiation and regulation of chromosomal replication. ATP-DnaA binds to the origin of replication (oriC) to initiate formation of the DNA replication initiation complex once per cell cycle. Binds the DnaA box (a 9 base pair repeat at the origin) and separates the double-stranded (ds)DNA. Forms a right-handed helical filament on oriC DNA; dsDNA binds to the exterior of the filament while single-stranded (ss)DNA is stabiized in the filament's interior. The ATP-DnaA-oriC complex binds and stabilizes one strand of the AT-rich DNA unwinding element (DUE), permitting loading of DNA polymerase. After initiation quickly degrades to an ADP-DnaA complex that is not apt for DNA replication. Binds acidic phospholipids. The protein is Chromosomal replication initiator protein DnaA of Staphylococcus haemolyticus (strain JCSC1435).